The chain runs to 146 residues: Large ribosomal subunit protein uL15 (146 aa).

Residues 1 to 54 are disordered; that stretch reads MTLRLNELAPAEGAKRDNRRLGRGIGSGVGKTGGRGVKGQKSRKSGGVRPGFEG. Over residues 23–37 the composition is skewed to gly residues; the sequence is RGIGSGVGKTGGRGV.

The protein belongs to the universal ribosomal protein uL15 family. In terms of assembly, part of the 50S ribosomal subunit.

Binds to the 23S rRNA. The chain is Large ribosomal subunit protein uL15 from Acinetobacter baylyi (strain ATCC 33305 / BD413 / ADP1).